The primary structure comprises 315 residues: Thioredoxin reductase (315 aa).

45-52 (EGNTPGGK) contacts FAD. The cysteines at positions 145 and 148 are disulfide-linked. 288–297 (DCRSKSFRQI) serves as a coordination point for FAD.

This sequence belongs to the class-II pyridine nucleotide-disulfide oxidoreductase family. In terms of assembly, homodimer. FAD serves as cofactor.

Its subcellular location is the cytoplasm. It carries out the reaction [thioredoxin]-dithiol + NADP(+) = [thioredoxin]-disulfide + NADPH + H(+). This chain is Thioredoxin reductase (trxB), found in Mycoplasma genitalium (strain ATCC 33530 / DSM 19775 / NCTC 10195 / G37) (Mycoplasmoides genitalium).